The following is a 1318-amino-acid chain: Maestro heat-like repeat family member 5 (1318 aa).

The disordered stretch occupies residues 1–38 (MDRQCSERPYSCTPTGRVSSAVSQNSRISPPVSTSMKD). Polar residues predominate over residues 12 to 38 (CTPTGRVSSAVSQNSRISPPVSTSMKD). Residues 581–618 (DELHFLLSHLYIWLASEKAHERQRAVHSCMILLKFLNH) form an HEAT 1 repeat. The segment at 676 to 695 (ESQAPKELSQAHSDGAPLWN) is disordered. HEAT repeat units lie at residues 769-811 (GAKL…SHTC), 840-880 (PTSH…LLAA), 996-1033 (RQIP…SPVL), 1037-1074 (LPKQ…HPDK), 1076-1113 (SLLQ…RLGA), 1118-1155 (SQSL…AMAD), 1164-1200 (QVHQ…LLRW), and 1278-1315 (VDTN…VSAR).

In Homo sapiens (Human), this protein is Maestro heat-like repeat family member 5 (MROH5).